The following is a 76-amino-acid chain: ATP synthase subunit 9, mitochondrial (76 aa).

2 helical membrane-spanning segments follow: residues 14-34 (ISTI…AALI) and 56-76 (ALSE…LFAV).

It belongs to the ATPase C chain family. F-type ATPases have 2 components, CF(1) - the catalytic core - and CF(0) - the membrane proton channel. CF(1) has five subunits: alpha(3), beta(3), gamma(1), delta(1), epsilon(1). CF(0) has three main subunits: a, b and c.

It is found in the mitochondrion membrane. Mitochondrial membrane ATP synthase (F(1)F(0) ATP synthase or Complex V) produces ATP from ADP in the presence of a proton gradient across the membrane which is generated by electron transport complexes of the respiratory chain. F-type ATPases consist of two structural domains, F(1) - containing the extramembraneous catalytic core and F(0) - containing the membrane proton channel, linked together by a central stalk and a peripheral stalk. During catalysis, ATP synthesis in the catalytic domain of F(1) is coupled via a rotary mechanism of the central stalk subunits to proton translocation. Part of the complex F(0) domain. A homomeric c-ring of probably 10 subunits is part of the complex rotary element. This chain is ATP synthase subunit 9, mitochondrial (ATP9), found in Candida glabrata (strain ATCC 2001 / BCRC 20586 / JCM 3761 / NBRC 0622 / NRRL Y-65 / CBS 138) (Yeast).